The sequence spans 397 residues: ATP phosphoribosyltransferase regulatory subunit (397 aa).

Belongs to the class-II aminoacyl-tRNA synthetase family. HisZ subfamily. In terms of assembly, heteromultimer composed of HisG and HisZ subunits.

The protein resides in the cytoplasm. Its pathway is amino-acid biosynthesis; L-histidine biosynthesis; L-histidine from 5-phospho-alpha-D-ribose 1-diphosphate: step 1/9. Functionally, required for the first step of histidine biosynthesis. May allow the feedback regulation of ATP phosphoribosyltransferase activity by histidine. This is ATP phosphoribosyltransferase regulatory subunit from Nitrosococcus oceani (strain ATCC 19707 / BCRC 17464 / JCM 30415 / NCIMB 11848 / C-107).